A 343-amino-acid polypeptide reads, in one-letter code: Olfactory receptor 6K6 (343 aa).

The Extracellular segment spans residues 1–53 (MKQYSVGNQHSNYRSLLFPFLCSQMTQLTASGNQTMVTEFLFSMFPHAHRGGL). N-linked (GlcNAc...) asparagine glycosylation occurs at asparagine 33. Residues 54–74 (LFFIPLLLIYGFILTGNLIMF) traverse the membrane as a helical segment. Over 75-82 (IVIQVGMA) the chain is Cytoplasmic. A helical membrane pass occupies residues 83–103 (LHTPLYFFISVLSFLEICYTT). Residues 104-127 (TTIPKMLSCLISEQKSISVAGCLL) are Extracellular-facing. An intrachain disulfide couples cysteine 125 to cysteine 217. Residues 128–148 (QMYFFHSLGITESCVLTAMAI) form a helical membrane-spanning segment. The Cytoplasmic portion of the chain corresponds to 149 to 167 (DRYIAICNPLRYPTIMIPK). A helical transmembrane segment spans residues 168-188 (LCIQLTVGSCFCGFLLVLPEI). Topologically, residues 189–224 (AWISTLPFCGSNQIHQIFCDFTPVLSLACTDTFLVV) are extracellular. A helical transmembrane segment spans residues 225 to 244 (IVDAIHAAEIVASFLVIALS). The Cytoplasmic portion of the chain corresponds to 245–264 (YIRIIIVILGMHSAEGHHKA). The helical transmembrane segment at 265–285 (FSTCAAHLAVFLLFFGSVAVM) threads the bilayer. Residues 286–298 (YLRFSATYSVFWD) are Extracellular-facing. Residues 299-319 (TAIAVTFVILAPFFNPIIYSL) traverse the membrane as a helical segment. Over 320–343 (KNKDMKEAIGRLFHYQKRAGWAGK) the chain is Cytoplasmic.

The protein belongs to the G-protein coupled receptor 1 family.

It localises to the cell membrane. Functionally, odorant receptor. The polypeptide is Olfactory receptor 6K6 (OR6K6) (Homo sapiens (Human)).